Here is a 619-residue protein sequence, read N- to C-terminus: Sodium-dependent dopamine transporter (619 aa).

Topologically, residues 1–56 are cytoplasmic; sequence MSKSKCSVGPMSSVVAPAKESNAVGPREVELILVKEQNGVQLTNSTLINPPQTPVE. Residues 57–95 form a discontinuously helical membrane-spanning segment; the sequence is AQERETWSKKIDFLLSVIGFAVDLANVWRFPYLCYKNGG. Na(+) contacts are provided by Gly-75, Ala-77, Val-78, Asp-79, and Asn-82. A dopamine-binding site is contributed by Asp-79. Transmembrane regions (helical) follow at residues 96-127 and 128-171; these read GAFL…NREG and AAGV…FSSF. Positions 149 and 153 each coordinate dopamine. The Extracellular segment spans residues 172 to 235; the sequence is TMDLPWIHCN…SRGIDDLGPP (64 aa). Cysteines 180 and 189 form a disulfide. Residues Asn-181, Asn-188, Asn-196, and Asn-204 are each glycosylated (N-linked (GlcNAc...) asparagine). Helical transmembrane passes span 236 to 255 and 256 to 286; these read RWQL…FSLW and KGVK…GVTL. Over 287-305 the chain is Extracellular; it reads PGAMDGIRAYLSVDFYRLC. A discontinuously helical transmembrane segment spans residues 306–334; it reads EASVWIDAATQVCFSLGVGFGVLIAFSSY. Gln-316 serves as a coordination point for chloride. Position 319 (Phe-319) interacts with dopamine. Na(+) contacts are provided by Ser-320 and Asn-352. Ser-320 is a chloride binding site. Residues 335 to 375 traverse the membrane as a helical segment; that stretch reads NKFTNNCYRDAIITTSINSLTSFSSGFVVFSFLGYMAQKHN. Residue Ser-356 coordinates chloride. Residues 376–399 lie on the Extracellular side of the membrane; sequence VPIRDVATDGPGLIFIIYPEAIAT. 3 consecutive transmembrane segments (helical) span residues 400-441, 442-465, and 466-498; these read LPLS…QLLH, RHRE…CVTN, and GGIY…AWFY. Na(+)-binding residues include Leu-417, Asp-420, and Ser-421. Dopamine is bound by residues Ser-421 and Ala-422. At 499-515 the chain is on the cytoplasmic side; it reads GVQQFSDDIKQMTGQRP. A helical membrane pass occupies residues 516 to 541; it reads NLYWRLCWKLVSPCFLLYVVVVSIVT. Topologically, residues 542–552 are extracellular; sequence FRPPHYGAYIF. A helical transmembrane segment spans residues 553 to 582; the sequence is PDWANALGWIIATSSMAMVPIYATYKFCSL. The segment at 560-589 is interaction with TGFB1I1; the sequence is GWIIATSSMAMVPIYATYKFCSLPGSFREK. The Cytoplasmic segment spans residues 583–619; that stretch reads PGSFREKLAYAITPEKDHQLVDRGEVRQFTLRHWLLL.

Belongs to the sodium:neurotransmitter symporter (SNF) (TC 2.A.22) family. SLC6A3 subfamily. Monomer. Homooligomer; disulfide-linked. Interacts with PRKCABP and TGFB1I1. Interacts (via N-terminus) with SYNGR3 (via N-terminus). Interacts with SLC18A2. Interacts with TOR1A (ATP-bound); TOR1A regulates SLC6A3 subcellular location. Interacts with alpha-synuclein/SNCA. Interacts with SEPTIN4. As to expression, brain. Expressed in the substantia nigra and ventral tegmental area, regions that contain dopaminergic cell bodies.

The protein localises to the cell membrane. It is found in the cell projection. Its subcellular location is the neuron projection. The protein resides in the axon. It catalyses the reaction dopamine(out) + chloride(out) + Na(+)(out) = dopamine(in) + chloride(in) + Na(+)(in). It carries out the reaction (R)-noradrenaline(out) + chloride(out) + Na(+)(out) = (R)-noradrenaline(in) + chloride(in) + Na(+)(in). The catalysed reaction is dopamine(out) + chloride(out) + 2 Na(+)(out) = dopamine(in) + chloride(in) + 2 Na(+)(in). Inhibited by mazindol, cocaine, desipramine, GBR 12783 dihydrochloride, GBR 12909 dihydrochloride and nomifensine. Inhibited by zinc ions. In terms of biological role, mediates sodium- and chloride-dependent transport of dopamine. Also mediates sodium- and chloride-dependent transport of norepinephrine (also known as noradrenaline). Regulator of light-dependent retinal hyaloid vessel regression, downstream of OPN5 signaling. The chain is Sodium-dependent dopamine transporter (Slc6a3) from Rattus norvegicus (Rat).